The following is a 155-amino-acid chain: Large ribosomal subunit protein uL11 (155 aa).

This sequence belongs to the universal ribosomal protein uL11 family. In terms of assembly, part of the ribosomal stalk of the 50S ribosomal subunit. Interacts with L10 and the large rRNA to form the base of the stalk. L10 forms an elongated spine to which L12 dimers bind in a sequential fashion forming a multimeric L10(L12)X complex.

Forms part of the ribosomal stalk which helps the ribosome interact with GTP-bound translation factors. The chain is Large ribosomal subunit protein uL11 from Picrophilus torridus (strain ATCC 700027 / DSM 9790 / JCM 10055 / NBRC 100828 / KAW 2/3).